The following is a 649-amino-acid chain: Epithelial sodium channel subunit gamma (649 aa).

Over 1–55 (MAPGEKIKAKIKKNLPVTGPQAPTIKELMRWYCLNTNTHGCRRIVVSRGRLRRLL) the chain is Cytoplasmic. A helical membrane pass occupies residues 56–76 (WIGFTLTAVALILWQCALLVF). At 77-541 (SFYTVSVSIK…GGQLGLWMSC (465 aa)) the chain is on the extracellular side. 8 disulfides stabilise this stretch: C100–C283, C207–C214, C260–C267, C372–C457, C394–C453, C398–C449, C407–C434, and C409–C423. Residues 135-221 (RKRREAESWN…SDCATYTFSS (87 aa)) form a gating release of inhibition by proteolysis (GRIP); protease-sensitive region that is responsible for the proteolytic activation of the channel region. N209 is a glycosylation site (N-linked (GlcNAc...) asparagine). An N-linked (GlcNAc...) asparagine glycan is attached at N497. A helical membrane pass occupies residues 542 to 562 (SVVCVIEIIEVFFIDFFSIIA). At 563–649 (RRQWQKAKEW…LTDTQMLDEL (87 aa)) the chain is on the cytoplasmic side. The PY motif; recruits WW domain-containing proteins and is thereby required for ubiquitination and inhibition of the channel by NEDD4 and NEDD4L motif lies at 623 to 627 (PPPKY).

Belongs to the amiloride-sensitive sodium channel (TC 1.A.6) family. SCNN1G subfamily. In terms of assembly, component of the heterotrimeric epithelial sodium channel (ENaC) composed of an alpha/SCNN1A, a beta/SCNN1B and a gamma/SCNN1G subunit. An additional delta/SCNN1D subunit can replace the alpha/SCNN1A subunit to form an alternative channel with specific properties. Interacts with WWP1 (via WW domains). Interacts with WWP2 (via WW domains); inhibits the channel. Interacts with the full-length immature form of PCSK9 (pro-PCSK9); inhibits ENaC by promoting its proteasomal degradation. Interacts with BPIFA1; the interaction is indirect via SCNN1B and inhibits the proteolytic maturation of SCNN1A and SCNN1G and the activation of ENaC. Post-translationally, phosphorylated on serine and threonine residues. Aldosterone and insulin increase the basal level of phosphorylation. Ubiquitinated. Can be ubiquitinated at multiple sites and undergo monoubiquitination and polyubiquitination. Ubiquitination by NEDD4 or NEDD4L inhibits the ENaC channel through endocytosis, intracellular retention and degradation of its individual subunits. In terms of processing, ENaC is activated through the proteolytic maturation of its subunits. Furin cleaves the SCNN1G subunit first, followed by cleavage by prostasin (PRSS8), which results in a stepwise increase in the open probability of the channel due to the release of an inhibitory tract. BPIFA1, which is recruited by the SCNN1B subunit, prevents the proteolytic activation of ENaC. Post-translationally, N-glycosylated. N-linked glycans are processed to complex type during ENaC complex assembly and transport to the plasma membrane. In terms of tissue distribution, expressed in kidney (at protein level).

Its subcellular location is the apical cell membrane. The catalysed reaction is Na(+)(in) = Na(+)(out). Originally identified and characterized by its inhibition by the diuretic drug amiloride. In terms of biological role, this is one of the three pore-forming subunits of the heterotrimeric epithelial sodium channel (ENaC), a critical regulator of sodium balance and fluid homeostasis. ENaC operates in epithelial tissues, where it mediates the electrodiffusion of sodium ions from extracellular fluid through the apical membrane of cells, with water following osmotically. It plays a key role in maintaining sodium homeostasis through electrogenic sodium reabsorption in the kidneys. Additionally, ENaC is essential for airway surface liquid homeostasis, which is crucial for proper mucus clearance. This Homo sapiens (Human) protein is Epithelial sodium channel subunit gamma.